Here is a 574-residue protein sequence, read N- to C-terminus: Glycine--tRNA ligase (574 aa).

The substrate site is built by Arg96 and Glu162. Residues 194 to 196, 204 to 209, 327 to 328, and 450 to 453 each bind ATP; these read RNE, IRLREF, EC, and GIDR. A substrate-binding site is contributed by 209–213; it reads FTQAE. 446–450 serves as a coordination point for substrate; the sequence is EPSYG.

Belongs to the class-II aminoacyl-tRNA synthetase family.

Its subcellular location is the cytoplasm. It catalyses the reaction tRNA(Gly) + glycine + ATP = glycyl-tRNA(Gly) + AMP + diphosphate. Functionally, catalyzes the attachment of glycine to tRNA(Gly). This is Glycine--tRNA ligase from Methanococcus maripaludis (strain C6 / ATCC BAA-1332).